The following is a 190-amino-acid chain: Elongation factor P (190 aa).

Belongs to the elongation factor P family.

It is found in the cytoplasm. The protein operates within protein biosynthesis; polypeptide chain elongation. In terms of biological role, involved in peptide bond synthesis. Stimulates efficient translation and peptide-bond synthesis on native or reconstituted 70S ribosomes in vitro. Probably functions indirectly by altering the affinity of the ribosome for aminoacyl-tRNA, thus increasing their reactivity as acceptors for peptidyl transferase. This Pseudomonas fluorescens (strain ATCC BAA-477 / NRRL B-23932 / Pf-5) protein is Elongation factor P.